A 172-amino-acid polypeptide reads, in one-letter code: Cytidylate kinase (172 aa).

4 to 12 (GPPGSGKST) is a binding site for ATP.

It belongs to the cytidylate kinase family. Type 2 subfamily.

Its subcellular location is the cytoplasm. The catalysed reaction is CMP + ATP = CDP + ADP. It catalyses the reaction dCMP + ATP = dCDP + ADP. This chain is Cytidylate kinase (cmk), found in Aeropyrum pernix (strain ATCC 700893 / DSM 11879 / JCM 9820 / NBRC 100138 / K1).